The following is a 407-amino-acid chain: Probable endo-beta-1,4-glucanase celB (407 aa).

Residues 1–18 (MAQTLAAASLVLVPLVTA) form the signal peptide. N-linked (GlcNAc...) asparagine glycosylation is present at asparagine 136. The active-site Nucleophile is the glutamate 216. The active-site Proton donor is the glutamate 221.

Belongs to the glycosyl hydrolase 7 (cellulase C) family.

The protein resides in the secreted. It catalyses the reaction Endohydrolysis of (1-&gt;4)-beta-D-glucosidic linkages in cellulose, lichenin and cereal beta-D-glucans.. Its function is as follows. Has endoglucanase activity on substrates containing beta-1,4 glycosidic bonds, like in carboxymethylcellulose (CMC), hydroxyethylcellulose (HEC) and beta-glucan. Involved in the degradation of complex natural cellulosic substrates. This Aspergillus fumigatus (strain ATCC MYA-4609 / CBS 101355 / FGSC A1100 / Af293) (Neosartorya fumigata) protein is Probable endo-beta-1,4-glucanase celB (celB).